Reading from the N-terminus, the 210-residue chain is Large ribosomal subunit protein mL57 (210 aa).

The N-terminal 59 residues, 1-59 (MLTRHCNRLGLQIENKFVFRSSSWNCVRRIGKIACNENKYRYEMTSTEEDIDSFFSRVF), are a transit peptide targeting the mitochondrion.

Belongs to the ribonuclease III family. Mitochondrion-specific ribosomal protein mL57 subfamily. In terms of assembly, component of the mitochondrial large ribosomal subunit (mt-LSU). Mature yeast 74S mitochondrial ribosomes consist of a small (37S) and a large (54S) subunit. The 37S small subunit contains a 15S ribosomal RNA (15S mt-rRNA) and at least 32 different proteins. The 54S large subunit contains a 21S rRNA (21S mt-rRNA) and at least 45 different proteins. mL57 forms a heterodimer with mL44 and stabilizes rRNA expansion segments 1/2 at a membrane-facing protuberance close to the point of attachment of the ribosome to the translocon in the membrane.

It is found in the mitochondrion. Its function is as follows. Component of the mitochondrial ribosome (mitoribosome), a dedicated translation machinery responsible for the synthesis of mitochondrial genome-encoded proteins, including at least some of the essential transmembrane subunits of the mitochondrial respiratory chain. The mitoribosomes are attached to the mitochondrial inner membrane and translation products are cotranslationally integrated into the membrane. In Schizosaccharomyces pombe (strain 972 / ATCC 24843) (Fission yeast), this protein is Large ribosomal subunit protein mL57 (mrp15).